The sequence spans 246 residues: UPF0736 protein GWCH70_0753 (246 aa).

It belongs to the UPF0736 family.

The protein is UPF0736 protein GWCH70_0753 of Geobacillus sp. (strain WCH70).